A 153-amino-acid chain; its full sequence is Aspartate carbamoyltransferase regulatory chain (153 aa).

Zn(2+)-binding residues include C109, C114, C138, and C141.

This sequence belongs to the PyrI family. In terms of assembly, contains catalytic and regulatory chains. Zn(2+) serves as cofactor.

Functionally, involved in allosteric regulation of aspartate carbamoyltransferase. The sequence is that of Aspartate carbamoyltransferase regulatory chain from Vibrio campbellii (strain ATCC BAA-1116).